Consider the following 269-residue polypeptide: E3 ubiquitin-protein ligase complex slx8-rfp subunit slx8 (269 aa).

The segment covering 1–10 (MPPAHKRDTN) has biased composition (basic and acidic residues). Disordered stretches follow at residues 1-75 (MPPA…LNRA) and 166-196 (PRKQKFEQGKNPSTTNAEIEKEEPSKKQVVP). The span at 60-70 (PSGTTSENESL) shows a compositional bias: polar residues. The RING-type zinc-finger motif lies at 206–247 (CVICLDSPENLSCTPCGHIFCNFCILSALGTTAATQKCPVCR).

As to quaternary structure, part of an E3 ubiquitin complex including rfp1, rfp2 and slx8. Interacts with rfp1 and rfp2.

The protein resides in the nucleus. It catalyses the reaction S-ubiquitinyl-[E2 ubiquitin-conjugating enzyme]-L-cysteine + [acceptor protein]-L-lysine = [E2 ubiquitin-conjugating enzyme]-L-cysteine + N(6)-ubiquitinyl-[acceptor protein]-L-lysine.. The protein operates within protein modification; protein ubiquitination. In terms of biological role, mediates ubiquitination and subsequent desumoylation/degradation of sumoylated proteins and proteins containing SUMO-like domains. Acts as a critical suppressor of gross chromosomal rearrangements (GCRs) during normal cell cycle progression. Involved in stabilizing, restarting or resolving transiently stalled replication forks. Prevents accumulation of DNA damage during cell cycle progression. The sequence is that of E3 ubiquitin-protein ligase complex slx8-rfp subunit slx8 (slx8) from Schizosaccharomyces pombe (strain 972 / ATCC 24843) (Fission yeast).